Reading from the N-terminus, the 197-residue chain is Phospholipid hydroperoxide glutathione peroxidase (197 aa).

Ser-40 carries the phosphoserine modification. The active site involves Sec-73. Position 73 (Sec-73) is a non-standard amino acid, selenocysteine.

This sequence belongs to the glutathione peroxidase family. As to quaternary structure, monomer. Has a tendency to form higher mass oligomers. Interacts with FUNDC1; this interaction promotes GPX4 recruitment into mitochondria through TOM/TIM complex where it is degraded by mitophagy.

Its subcellular location is the mitochondrion. The protein localises to the cytoplasm. It catalyses the reaction a hydroperoxy polyunsaturated fatty acid + 2 glutathione = a hydroxy polyunsaturated fatty acid + glutathione disulfide + H2O. It carries out the reaction 2 glutathione + H2O2 = glutathione disulfide + 2 H2O. The enzyme catalyses tert-butyl hydroperoxide + 2 glutathione = tert-butanol + glutathione disulfide + H2O. The catalysed reaction is cumene hydroperoxide + 2 glutathione = 2-phenylpropan-2-ol + glutathione disulfide + H2O. It catalyses the reaction (9S)-hydroperoxy-(10E,12Z)-octadecadienoate + 2 glutathione = (9S)-hydroxy-(10E,12Z)-octadecadienoate + glutathione disulfide + H2O. It carries out the reaction (13S)-hydroperoxy-(9Z,11E)-octadecadienoate + 2 glutathione = (13S)-hydroxy-(9Z,11E)-octadecadienoate + glutathione disulfide + H2O. The enzyme catalyses (5S)-hydroperoxy-(6E,8Z,11Z,14Z)-eicosatetraenoate + 2 glutathione = (5S)-hydroxy-(6E,8Z,11Z,14Z)-eicosatetraenoate + glutathione disulfide + H2O. The catalysed reaction is (12R)-hydroperoxy-(5Z,8Z,10E,14Z)-eicosatetraenoate + 2 glutathione = (12R)-hydroxy-(5Z,8Z,10E,14Z)-eicosatetraenoate + glutathione disulfide + H2O. It catalyses the reaction (12S)-hydroperoxy-(5Z,8Z,10E,14Z)-eicosatetraenoate + 2 glutathione = (12S)-hydroxy-(5Z,8Z,10E,14Z)-eicosatetraenoate + glutathione disulfide + H2O. It carries out the reaction (15S)-hydroperoxy-(5Z,8Z,11Z,13E)-eicosatetraenoate + 2 glutathione = (15S)-hydroxy-(5Z,8Z,11Z,13E)-eicosatetraenoate + glutathione disulfide + H2O. The enzyme catalyses (5S)-hydroperoxy-(6E,8Z,11Z,14Z,17Z)-eicosapentaenoate + 2 glutathione = (5S)-hydroxy-(6E,8Z,11Z,14Z,17Z)-eicosapentaenoate + glutathione disulfide + H2O. The catalysed reaction is (12S)-hydroperoxy-(5Z,8Z,10E,14Z,17Z)-eicosapentaenoate + 2 glutathione = (12S)-hydroxy-(5Z,8Z,10E,14Z,17Z)-eicosapentaenoate + glutathione disulfide + H2O. It catalyses the reaction (15S)-hydroperoxy-(5Z,8Z,11Z,13E,17Z)-eicosapentaenoate + 2 glutathione = (15S)-hydroxy-(5Z,8Z,11Z,13E,17Z)-eicosapentaenoate + glutathione disulfide + H2O. It carries out the reaction (15S)-hydroperoxy-(11Z,13E)-eicosadienoate + 2 glutathione = (15S)-hydroxy-(11Z,13E)-eicosadienoate + glutathione disulfide + H2O. The enzyme catalyses (17S)-hydroperoxy-(4Z,7Z,10Z,13Z,15E,19Z)-docosahexaenoate + 2 glutathione = (17S)-hydroxy-(4Z,7Z,10Z,13Z,15E,19Z)-docosahexaenoate + glutathione disulfide + H2O. The catalysed reaction is a hydroperoxy-1,2-diacyl-glycero-3-phosphocholine + 2 glutathione = a hydroxy-1,2-diacyl-glycero-3-phosphocholine + glutathione disulfide + H2O. Functionally, essential antioxidant peroxidase that directly reduces phospholipid hydroperoxide even if they are incorporated in membranes and lipoproteins. Can also reduce fatty acid hydroperoxide, cholesterol hydroperoxide and thymine hydroperoxide. Plays a key role in protecting cells from oxidative damage by preventing membrane lipid peroxidation. Required to prevent cells from ferroptosis, a non-apoptotic cell death resulting from an iron-dependent accumulation of lipid reactive oxygen species. The presence of selenocysteine (Sec) versus Cys at the active site is essential for life: it provides resistance to overoxidation and prevents cells against ferroptosis. The presence of Sec at the active site is also essential for the survival of a specific type of parvalbumin-positive interneurons, thereby preventing against fatal epileptic seizures. May be required to protect cells from the toxicity of ingested lipid hydroperoxides. Required for normal sperm development and male fertility. Essential for maturation and survival of photoreceptor cells. Plays a role in a primary T-cell response to viral and parasitic infection by protecting T-cells from ferroptosis and by supporting T-cell expansion. Plays a role of glutathione peroxidase in platelets in the arachidonic acid metabolism. Reduces hydroperoxy ester lipids formed by a 15-lipoxygenase that may play a role as down-regulator of the cellular 15-lipoxygenase pathway. Can also reduce small soluble hydroperoxides such as H2O2, cumene hydroperoxide and tert-butyl hydroperoxide. The chain is Phospholipid hydroperoxide glutathione peroxidase from Hylobates lar (Lar gibbon).